The primary structure comprises 271 residues: Urease accessory protein UreD (271 aa).

This sequence belongs to the UreD family. UreD, UreF and UreG form a complex that acts as a GTP-hydrolysis-dependent molecular chaperone, activating the urease apoprotein by helping to assemble the nickel containing metallocenter of UreC. The UreE protein probably delivers the nickel.

Its subcellular location is the cytoplasm. Functionally, required for maturation of urease via the functional incorporation of the urease nickel metallocenter. This Bacillus sp. (strain TB-90) protein is Urease accessory protein UreD.